The sequence spans 141 residues: Large ribosomal subunit protein uL11 (141 aa).

Belongs to the universal ribosomal protein uL11 family. Part of the ribosomal stalk of the 50S ribosomal subunit. Interacts with L10 and the large rRNA to form the base of the stalk. L10 forms an elongated spine to which L12 dimers bind in a sequential fashion forming a multimeric L10(L12)X complex. In terms of processing, one or more lysine residues are methylated.

Functionally, forms part of the ribosomal stalk which helps the ribosome interact with GTP-bound translation factors. The protein is Large ribosomal subunit protein uL11 of Chlamydia abortus (strain DSM 27085 / S26/3) (Chlamydophila abortus).